The chain runs to 470 residues: Argininosuccinate lyase (470 aa).

It belongs to the lyase 1 family. Argininosuccinate lyase subfamily.

It is found in the cytoplasm. The catalysed reaction is 2-(N(omega)-L-arginino)succinate = fumarate + L-arginine. It participates in amino-acid biosynthesis; L-arginine biosynthesis; L-arginine from L-ornithine and carbamoyl phosphate: step 3/3. In Ehrlichia chaffeensis (strain ATCC CRL-10679 / Arkansas), this protein is Argininosuccinate lyase.